Consider the following 108-residue polypeptide: MATLKIKKGDTVQIITGKDRGLKGKVIRAYPEQNKVLVEGANRITRHTRVQQGTRGSQSGGIITQEAPIHVSNVMIVDPSDGKPTRIGYRINDDGTKVRVSRRTGTEL.

Belongs to the universal ribosomal protein uL24 family. As to quaternary structure, part of the 50S ribosomal subunit.

One of two assembly initiator proteins, it binds directly to the 5'-end of the 23S rRNA, where it nucleates assembly of the 50S subunit. In terms of biological role, one of the proteins that surrounds the polypeptide exit tunnel on the outside of the subunit. The protein is Large ribosomal subunit protein uL24 of Frankia casuarinae (strain DSM 45818 / CECT 9043 / HFP020203 / CcI3).